The chain runs to 274 residues: Large ribosomal subunit protein uL2 (274 aa).

The segment at 223 to 257 is disordered; sequence VAMNPVDHPHGGGEGRTSGGRHPVTPWGIPTKGYK.

Belongs to the universal ribosomal protein uL2 family. In terms of assembly, part of the 50S ribosomal subunit. Forms a bridge to the 30S subunit in the 70S ribosome.

One of the primary rRNA binding proteins. Required for association of the 30S and 50S subunits to form the 70S ribosome, for tRNA binding and peptide bond formation. It has been suggested to have peptidyltransferase activity; this is somewhat controversial. Makes several contacts with the 16S rRNA in the 70S ribosome. The sequence is that of Large ribosomal subunit protein uL2 from Geobacter sulfurreducens (strain ATCC 51573 / DSM 12127 / PCA).